The sequence spans 406 residues: Cysteine desulfurase (406 aa).

Residue Lys226 is modified to N6-(pyridoxal phosphate)lysine. The Cysteine persulfide intermediate role is filled by Cys364.

Belongs to the class-V pyridoxal-phosphate-dependent aminotransferase family. Csd subfamily. As to quaternary structure, homodimer. Interacts with SufE and the SufBCD complex composed of SufB, SufC and SufD. The interaction with SufE is required to mediate the direct transfer of the sulfur atom from the S-sulfanylcysteine. It depends on pyridoxal 5'-phosphate as a cofactor.

The protein localises to the cytoplasm. The enzyme catalyses (sulfur carrier)-H + L-cysteine = (sulfur carrier)-SH + L-alanine. It carries out the reaction L-selenocysteine + AH2 = hydrogenselenide + L-alanine + A + H(+). It functions in the pathway cofactor biosynthesis; iron-sulfur cluster biosynthesis. In terms of biological role, cysteine desulfurases mobilize the sulfur from L-cysteine to yield L-alanine, an essential step in sulfur metabolism for biosynthesis of a variety of sulfur-containing biomolecules. Component of the suf operon, which is activated and required under specific conditions such as oxidative stress and iron limitation. Acts as a potent selenocysteine lyase in vitro, that mobilizes selenium from L-selenocysteine. Selenocysteine lyase activity is however unsure in vivo. This Escherichia coli O17:K52:H18 (strain UMN026 / ExPEC) protein is Cysteine desulfurase.